We begin with the raw amino-acid sequence, 414 residues long: Serine/threonine transporter SstT (414 aa).

Transmembrane regions (helical) follow at residues 22 to 42, 54 to 74, 89 to 109, 148 to 168, 189 to 209, 223 to 243, 305 to 325, and 337 to 357; these read GLVL…TIGF, IFVK…VMAA, IIVL…IAGF, AIFK…GLAL, IVHV…AETL, LLAV…PILV, MAGA…TLGL, and IVAA…LLLI.

It belongs to the dicarboxylate/amino acid:cation symporter (DAACS) (TC 2.A.23) family.

It is found in the cell inner membrane. It carries out the reaction L-serine(in) + Na(+)(in) = L-serine(out) + Na(+)(out). It catalyses the reaction L-threonine(in) + Na(+)(in) = L-threonine(out) + Na(+)(out). Its function is as follows. Involved in the import of serine and threonine into the cell, with the concomitant import of sodium (symport system). In Haemophilus influenzae (strain PittEE), this protein is Serine/threonine transporter SstT.